The primary structure comprises 501 residues: Probable cytosol aminopeptidase (501 aa).

Mn(2+) contacts are provided by Lys272 and Asp277. Residue Lys284 is part of the active site. Residues Asp295, Asp354, and Glu356 each coordinate Mn(2+). Arg358 is an active-site residue.

Belongs to the peptidase M17 family. The cofactor is Mn(2+).

The protein localises to the cytoplasm. It catalyses the reaction Release of an N-terminal amino acid, Xaa-|-Yaa-, in which Xaa is preferably Leu, but may be other amino acids including Pro although not Arg or Lys, and Yaa may be Pro. Amino acid amides and methyl esters are also readily hydrolyzed, but rates on arylamides are exceedingly low.. The enzyme catalyses Release of an N-terminal amino acid, preferentially leucine, but not glutamic or aspartic acids.. Its function is as follows. Presumably involved in the processing and regular turnover of intracellular proteins. Catalyzes the removal of unsubstituted N-terminal amino acids from various peptides. This Buchnera aphidicola subsp. Baizongia pistaciae (strain Bp) protein is Probable cytosol aminopeptidase.